The sequence spans 159 residues: NADH-quinone oxidoreductase subunit I (159 aa).

4Fe-4S ferredoxin-type domains lie at 51-80 and 90-119; these read RRYENGEERCIACKLCEAICPAQAIVIEAD and TRYDIDMTKCIYCGLCQEACPVDAIVEGPN. [4Fe-4S] cluster contacts are provided by C60, C63, C66, C70, C99, C102, C105, and C109.

This sequence belongs to the complex I 23 kDa subunit family. In terms of assembly, NDH-1 is composed of 14 different subunits. Subunits NuoA, H, J, K, L, M, N constitute the membrane sector of the complex. [4Fe-4S] cluster is required as a cofactor.

Its subcellular location is the cell membrane. The catalysed reaction is a quinone + NADH + 5 H(+)(in) = a quinol + NAD(+) + 4 H(+)(out). Its function is as follows. NDH-1 shuttles electrons from NADH, via FMN and iron-sulfur (Fe-S) centers, to quinones in the respiratory chain. The immediate electron acceptor for the enzyme in this species is believed to be ubiquinone. Couples the redox reaction to proton translocation (for every two electrons transferred, four hydrogen ions are translocated across the cytoplasmic membrane), and thus conserves the redox energy in a proton gradient. The polypeptide is NADH-quinone oxidoreductase subunit I (Rickettsia africae (strain ESF-5)).